Here is a 294-residue protein sequence, read N- to C-terminus: Ethylene-inducing xylanase 3 (294 aa).

Positions 1–19 (MVCFSSLFVAASAIAGVFA) are cleaved as a signal peptide. Residues 31–226 (QSTPSSQGTH…SSGSARINVA (196 aa)) form the GH11 domain. The active-site Nucleophile is Glu-122. Residue Glu-213 is the Proton donor of the active site. A CBM1 domain is found at 259-294 (SCAARWGQCGGSGWNGATCCSAGTCQAQNQWYSQCL).

The protein belongs to the glycosyl hydrolase 11 (cellulase G) family.

The enzyme catalyses Endohydrolysis of (1-&gt;4)-beta-D-xylosidic linkages in xylans.. Its pathway is glycan degradation; xylan degradation. In terms of biological role, endo-1,4-beta-xylanase involved in the hydrolysis of xylan, a major structural heterogeneous polysaccharide found in plant biomass representing the second most abundant polysaccharide in the biosphere, after cellulose. Exhibits immunity-inducing activity in Nicotiana benthamiana. Can induce strong oxidative burst, activate the expression of defense-related genes, and increase resistance against oomycete and fungal pathogens in N.benthamiana. This chain is Ethylene-inducing xylanase 3, found in Verticillium dahliae (strain VdLs.17 / ATCC MYA-4575 / FGSC 10137) (Verticillium wilt).